Here is a 94-residue protein sequence, read N- to C-terminus: Integration host factor subunit beta (94 aa).

Belongs to the bacterial histone-like protein family. Heterodimer of an alpha and a beta chain.

This protein is one of the two subunits of integration host factor, a specific DNA-binding protein that functions in genetic recombination as well as in transcriptional and translational control. The chain is Integration host factor subunit beta from Haemophilus influenzae (strain PittGG).